The sequence spans 141 residues: Nucleoside diphosphate kinase (141 aa).

6 residues coordinate ATP: K11, F59, R87, T93, R104, and N114. H117 (pros-phosphohistidine intermediate) is an active-site residue.

It belongs to the NDK family. In terms of assembly, homotetramer. The cofactor is Mg(2+).

It localises to the cytoplasm. It carries out the reaction a 2'-deoxyribonucleoside 5'-diphosphate + ATP = a 2'-deoxyribonucleoside 5'-triphosphate + ADP. It catalyses the reaction a ribonucleoside 5'-diphosphate + ATP = a ribonucleoside 5'-triphosphate + ADP. Its function is as follows. Major role in the synthesis of nucleoside triphosphates other than ATP. The ATP gamma phosphate is transferred to the NDP beta phosphate via a ping-pong mechanism, using a phosphorylated active-site intermediate. In Acidovorax sp. (strain JS42), this protein is Nucleoside diphosphate kinase.